A 198-amino-acid polypeptide reads, in one-letter code: Holliday junction branch migration complex subunit RuvA (198 aa).

Positions 1 to 64 (MYEYIKGEYM…EDFIGLYGFE (64 aa)) are domain I. Positions 65-143 (SLEELDMFKL…SDELLNCIDE (79 aa)) are domain II. Residues 144–154 (FDDVTQDNSLA) are flexible linker. Residues 154–198 (ALSEALSALISLGYTEKEAEKVLKDVDKSESVENIIKSALVKLMG) form a domain III region.

The protein belongs to the RuvA family. Homotetramer. Forms an RuvA(8)-RuvB(12)-Holliday junction (HJ) complex. HJ DNA is sandwiched between 2 RuvA tetramers; dsDNA enters through RuvA and exits via RuvB. An RuvB hexamer assembles on each DNA strand where it exits the tetramer. Each RuvB hexamer is contacted by two RuvA subunits (via domain III) on 2 adjacent RuvB subunits; this complex drives branch migration. In the full resolvosome a probable DNA-RuvA(4)-RuvB(12)-RuvC(2) complex forms which resolves the HJ.

It localises to the cytoplasm. Its function is as follows. The RuvA-RuvB-RuvC complex processes Holliday junction (HJ) DNA during genetic recombination and DNA repair, while the RuvA-RuvB complex plays an important role in the rescue of blocked DNA replication forks via replication fork reversal (RFR). RuvA specifically binds to HJ cruciform DNA, conferring on it an open structure. The RuvB hexamer acts as an ATP-dependent pump, pulling dsDNA into and through the RuvAB complex. HJ branch migration allows RuvC to scan DNA until it finds its consensus sequence, where it cleaves and resolves the cruciform DNA. The chain is Holliday junction branch migration complex subunit RuvA from Clostridium botulinum (strain Alaska E43 / Type E3).